A 657-amino-acid chain; its full sequence is 1-deoxy-D-xylulose-5-phosphate synthase (657 aa).

Thiamine diphosphate is bound by residues H73 and S113–A115. D145 serves as a coordination point for Mg(2+). Residues G146–A147, N175, Y293, and E375 contribute to the thiamine diphosphate site. N175 contributes to the Mg(2+) binding site.

The protein belongs to the transketolase family. DXPS subfamily. As to quaternary structure, homodimer. Requires Mg(2+) as cofactor. Thiamine diphosphate is required as a cofactor.

The catalysed reaction is D-glyceraldehyde 3-phosphate + pyruvate + H(+) = 1-deoxy-D-xylulose 5-phosphate + CO2. It functions in the pathway metabolic intermediate biosynthesis; 1-deoxy-D-xylulose 5-phosphate biosynthesis; 1-deoxy-D-xylulose 5-phosphate from D-glyceraldehyde 3-phosphate and pyruvate: step 1/1. Functionally, catalyzes the acyloin condensation reaction between C atoms 2 and 3 of pyruvate and glyceraldehyde 3-phosphate to yield 1-deoxy-D-xylulose-5-phosphate (DXP). This is 1-deoxy-D-xylulose-5-phosphate synthase from Pseudarthrobacter chlorophenolicus (strain ATCC 700700 / DSM 12829 / CIP 107037 / JCM 12360 / KCTC 9906 / NCIMB 13794 / A6) (Arthrobacter chlorophenolicus).